Consider the following 121-residue polypeptide: Ribonuclease P protein component (121 aa).

It belongs to the RnpA family. Consists of a catalytic RNA component (M1 or rnpB) and a protein subunit.

It catalyses the reaction Endonucleolytic cleavage of RNA, removing 5'-extranucleotides from tRNA precursor.. Its function is as follows. RNaseP catalyzes the removal of the 5'-leader sequence from pre-tRNA to produce the mature 5'-terminus. It can also cleave other RNA substrates such as 4.5S RNA. The protein component plays an auxiliary but essential role in vivo by binding to the 5'-leader sequence and broadening the substrate specificity of the ribozyme. The polypeptide is Ribonuclease P protein component (Geobacillus kaustophilus (strain HTA426)).